The primary structure comprises 118 residues: Immunoglobulin heavy variable 3-9 (118 aa).

An N-terminal signal peptide occupies residues 1-19; sequence MELGLSWIFLLAILKGVQC. The interval 20–44 is framework-1; sequence EVQLVESGGGLVQPGRSLRLSCAAS. The region spanning 20-118 is the Ig-like domain; it reads EVQLVESGGG…DTALYYCAKD (99 aa). Cys41 and Cys115 are oxidised to a cystine. Positions 45-52 are complementarity-determining-1; it reads GFTFDDYA. The segment at 53–69 is framework-2; it reads MHWVRQAPGKGLEWVSG. Positions 70-77 are complementarity-determining-2; sequence ISWNSGSI. The interval 78–115 is framework-3; it reads GYADSVKGRFTISRDNAKNSLYLQMNSLRAEDTALYYC. Positions 116–118 are complementarity-determining-3; that stretch reads AKD.

In terms of assembly, immunoglobulins are composed of two identical heavy chains and two identical light chains; disulfide-linked.

It is found in the secreted. Its subcellular location is the cell membrane. Functionally, v region of the variable domain of immunoglobulin heavy chains that participates in the antigen recognition. Immunoglobulins, also known as antibodies, are membrane-bound or secreted glycoproteins produced by B lymphocytes. In the recognition phase of humoral immunity, the membrane-bound immunoglobulins serve as receptors which, upon binding of a specific antigen, trigger the clonal expansion and differentiation of B lymphocytes into immunoglobulins-secreting plasma cells. Secreted immunoglobulins mediate the effector phase of humoral immunity, which results in the elimination of bound antigens. The antigen binding site is formed by the variable domain of one heavy chain, together with that of its associated light chain. Thus, each immunoglobulin has two antigen binding sites with remarkable affinity for a particular antigen. The variable domains are assembled by a process called V-(D)-J rearrangement and can then be subjected to somatic hypermutations which, after exposure to antigen and selection, allow affinity maturation for a particular antigen. The chain is Immunoglobulin heavy variable 3-9 from Homo sapiens (Human).